A 64-amino-acid polypeptide reads, in one-letter code: Large ribosomal subunit protein bL35 (64 aa).

This sequence belongs to the bacterial ribosomal protein bL35 family.

The chain is Large ribosomal subunit protein bL35 from Desulforamulus reducens (strain ATCC BAA-1160 / DSM 100696 / MI-1) (Desulfotomaculum reducens).